A 121-amino-acid chain; its full sequence is Large ribosomal subunit protein uL18 (121 aa).

It belongs to the universal ribosomal protein uL18 family. In terms of assembly, part of the 50S ribosomal subunit; part of the 5S rRNA/L5/L18/L25 subcomplex. Contacts the 5S and 23S rRNAs.

Its function is as follows. This is one of the proteins that bind and probably mediate the attachment of the 5S RNA into the large ribosomal subunit, where it forms part of the central protuberance. The polypeptide is Large ribosomal subunit protein uL18 (Leptothrix cholodnii (strain ATCC 51168 / LMG 8142 / SP-6) (Leptothrix discophora (strain SP-6))).